Consider the following 72-residue polypeptide: Large ribosomal subunit protein bL31 (72 aa).

The Zn(2+) site is built by Cys16, Cys18, Cys38, and Cys41.

It belongs to the bacterial ribosomal protein bL31 family. Type A subfamily. Part of the 50S ribosomal subunit. It depends on Zn(2+) as a cofactor.

Functionally, binds the 23S rRNA. This is Large ribosomal subunit protein bL31 from Aromatoleum aromaticum (strain DSM 19018 / LMG 30748 / EbN1) (Azoarcus sp. (strain EbN1)).